Reading from the N-terminus, the 330-residue chain is DNA-directed RNA polymerase subunit alpha (330 aa).

The tract at residues 1-237 is alpha N-terminal domain (alpha-NTD); that stretch reads MYTEINEMLT…RQLHAFVDMK (237 aa). Positions 251-330 are alpha C-terminal domain (alpha-CTD); sequence FDPVLLRSVD…ENWPPASLGE (80 aa).

Belongs to the RNA polymerase alpha chain family. In terms of assembly, homodimer. The RNAP catalytic core consists of 2 alpha, 1 beta, 1 beta' and 1 omega subunit. When a sigma factor is associated with the core the holoenzyme is formed, which can initiate transcription.

It catalyses the reaction RNA(n) + a ribonucleoside 5'-triphosphate = RNA(n+1) + diphosphate. Functionally, DNA-dependent RNA polymerase catalyzes the transcription of DNA into RNA using the four ribonucleoside triphosphates as substrates. This chain is DNA-directed RNA polymerase subunit alpha, found in Legionella pneumophila (strain Corby).